The sequence spans 404 residues: Cysteine desulfurase IscS (404 aa).

Residues 75–76, Asn-155, Gln-183, and 203–205 each bind pyridoxal 5'-phosphate; these read AT and SGH. Lys-206 carries the post-translational modification N6-(pyridoxal phosphate)lysine. Residue Thr-243 coordinates pyridoxal 5'-phosphate. Cys-328 functions as the Cysteine persulfide intermediate in the catalytic mechanism. Cys-328 is a [2Fe-2S] cluster binding site.

Belongs to the class-V pyridoxal-phosphate-dependent aminotransferase family. NifS/IscS subfamily. In terms of assembly, homodimer. Forms a heterotetramer with IscU, interacts with other sulfur acceptors. Pyridoxal 5'-phosphate serves as cofactor.

It is found in the cytoplasm. It carries out the reaction (sulfur carrier)-H + L-cysteine = (sulfur carrier)-SH + L-alanine. Its pathway is cofactor biosynthesis; iron-sulfur cluster biosynthesis. Functionally, master enzyme that delivers sulfur to a number of partners involved in Fe-S cluster assembly, tRNA modification or cofactor biosynthesis. Catalyzes the removal of elemental sulfur atoms from cysteine to produce alanine. Functions as a sulfur delivery protein for Fe-S cluster synthesis onto IscU, an Fe-S scaffold assembly protein, as well as other S acceptor proteins. The sequence is that of Cysteine desulfurase IscS from Shewanella frigidimarina (strain NCIMB 400).